The chain runs to 596 residues: Jacalin-related lectin 46 (596 aa).

A disordered region spans residues 1 to 20 (MTERSEALGKDGNRRWDDKS). Jacalin-type lectin domains lie at 2-143 (TERS…YFTR), 146-291 (PTRI…YFTP), 294-439 (PTKS…HFYP), and 446-592 (AEKL…HVLP).

The protein belongs to the jacalin lectin family.

This chain is Jacalin-related lectin 46 (JAL46), found in Arabidopsis thaliana (Mouse-ear cress).